Reading from the N-terminus, the 493-residue chain is Glutamate--tRNA ligase (493 aa).

Positions 10–20 (PSPTGFVHIGS) match the 'HIGH' region motif. Zn(2+) contacts are provided by cysteine 114, cysteine 116, cysteine 141, and glutamate 143. Residues 258 to 262 (KLSKR) carry the 'KMSKS' region motif. Lysine 261 serves as a coordination point for ATP.

It belongs to the class-I aminoacyl-tRNA synthetase family. Glutamate--tRNA ligase type 1 subfamily. Monomer. The cofactor is Zn(2+).

The protein resides in the cytoplasm. The enzyme catalyses tRNA(Glu) + L-glutamate + ATP = L-glutamyl-tRNA(Glu) + AMP + diphosphate. Catalyzes the attachment of glutamate to tRNA(Glu) in a two-step reaction: glutamate is first activated by ATP to form Glu-AMP and then transferred to the acceptor end of tRNA(Glu). The sequence is that of Glutamate--tRNA ligase from Alkaliphilus metalliredigens (strain QYMF).